Consider the following 351-residue polypeptide: ATP-dependent 6-phosphofructokinase subunit gamma (351 aa).

In terms of assembly, heterododecamer of 4 alpha, 4 beta and 4 gamma chains. The gamma chain bridges the N-terminal halves of the alpha and beta subunits.

The protein localises to the cytoplasm. It participates in carbohydrate degradation; glycolysis; D-glyceraldehyde 3-phosphate and glycerone phosphate from D-glucose: step 3/4. In terms of biological role, structural subunit of pyrophosphate--fructose 6-phosphate 1-phosphotransferase. Not required for catalytic activity. Fine-tunes allosteric regulation of the ATP-PFK by ATP, fructose 2,6-bisphosphate and AMP. The sequence is that of ATP-dependent 6-phosphofructokinase subunit gamma (PFK3) from Komagataella pastoris (Yeast).